Consider the following 204-residue polypeptide: NAD(P)H dehydrogenase (quinone) FQR1 (204 aa).

In terms of domain architecture, Flavodoxin-like spans 5–192 (VYIVYYSMYG…QQAFHQGQYI (188 aa)). FMN is bound by residues 11–15 (SMYGH), 112–165 (IFYS…SPYG), and His136. Residue Tyr13 participates in NAD(+) binding.

It belongs to the WrbA family. It depends on FMN as a cofactor.

The protein localises to the cell membrane. The enzyme catalyses a quinone + NADH + H(+) = a quinol + NAD(+). The catalysed reaction is a quinone + NADPH + H(+) = a quinol + NADP(+). In terms of biological role, catalyzes the transfer of electrons from NADH and NADPH to several quinones in vitro. May act as detoxification enzyme, and protect against auxin-induced oxidative stress. The protein is NAD(P)H dehydrogenase (quinone) FQR1 of Arabidopsis thaliana (Mouse-ear cress).